Reading from the N-terminus, the 581-residue chain is Multidrug and toxin extrusion protein 2 (581 aa).

The Cytoplasmic segment spans residues 1 to 33 (MDSLQDTVPLDHGGCCPALSRLVPRGFGTEMWT). Residues 34–54 (LFALSGPLFLFQVLTFMIYIV) form a helical membrane-spanning segment. Over 55–66 (STVFCGHLGKVE) the chain is Extracellular. Residues 67 to 87 (LASVTLAVAFVNVCGVSVGVG) form a helical membrane-spanning segment. At 88–119 (LSSACDTLMSQSFGSPNKKHVGVILQRGALVL) the chain is on the cytoplasmic side. A helical membrane pass occupies residues 120–140 (LLCCLPCWALFLNTQHILLLF). Residues 141-153 (RQDPEVSRLTQDY) are Extracellular-facing. A helical membrane pass occupies residues 154–174 (VMIFIPGLPVIFLYNLLAKYL). The Cytoplasmic segment spans residues 175–183 (QNQKITWPQ). The chain crosses the membrane as a helical span at residues 184 to 204 (VLSGVVGNCVNGVANYALVSV). Residues 205 to 212 (LNLGVRGS) are Extracellular-facing. A helical membrane pass occupies residues 213–233 (AYANIISQFAQTVFLLLYIVL). At 234-253 (KKLHLETWAGWSSQCLQDWG) the chain is on the cytoplasmic side. The helical transmembrane segment at 254 to 273 (PFFSLAVPSMLMICVEWWAY) threads the bilayer. The Extracellular portion of the chain corresponds to 274 to 317 (EIGSFLMGLLSVVDLSAQAVIYEVATVTYMRHSHHLAYTAHVAR). A helical membrane pass occupies residues 318–338 (IPLGLSIGVCVRVGMALGAAD). Residues 339-346 (TVQAKRSA) are Cytoplasmic-facing. A helical transmembrane segment spans residues 347–367 (VSGVLSIVGISLVLGTLISIL). At 368–380 (KNQLGHIFTNDED) the chain is on the extracellular side. The chain crosses the membrane as a helical span at residues 381–401 (VIALVSQVLPVYSVFHVFEAI). Residues 402 to 420 (CCVYGGVLRGTGKQAFGAA) lie on the Cytoplasmic side of the membrane. Residues 421 to 441 (VNAITYYIIGLPLGILLTFVV) form a helical membrane-spanning segment. The Extracellular segment spans residues 442-444 (RMR). The helical transmembrane segment at 445 to 465 (IMGLWLGMLACVFLATAAFVA) threads the bilayer. Residues 466–557 (YTARLDWKLA…LSVKQLVIRR (92 aa)) lie on the Cytoplasmic side of the membrane. Positions 481 to 513 (KHSGQQQQQQRAESTATRSGPEKAVLSSVATGS) are disordered. The helical transmembrane segment at 558–578 (GAALGAASATLMVGLTVRILA) threads the bilayer. Residues 579 to 581 (TRH) are Extracellular-facing.

The protein belongs to the multi antimicrobial extrusion (MATE) (TC 2.A.66.1) family.

It is found in the cell membrane. It localises to the apical cell membrane. It catalyses the reaction thiamine(out) + H(+)(in) = thiamine(in) + H(+)(out). It carries out the reaction estrone 3-sulfate(in) + H(+)(out) = estrone 3-sulfate(out) + H(+)(in). The catalysed reaction is creatinine(in) + H(+)(out) = creatinine(out) + H(+)(in). Functionally, multidrug efflux pump that functions as a H(+)/organic cation antiporter. Mediates the efflux of cationic compounds, such as the model cations, tetraethylammonium (TEA) and 1-methyl-4-phenylpyridinium (MPP+), the platinum-based drug oxaliplatin or weak bases that are positively charged at physiological pH, cimetidine or the antidiabetic drug metformin. Mediates the efflux of the endogenous compounds creatinine, thiamine and estrone-3-sulfate. Plays a physiological role in the excretion of drugs, toxins and endogenous metabolites through the kidney. This chain is Multidrug and toxin extrusion protein 2 (SLC47A2), found in Pongo abelii (Sumatran orangutan).